The chain runs to 87 residues: Scorpine-like peptide Tco 41.46-2 (87 aa).

Positions 1–19 are cleaved as a signal peptide; the sequence is MERKLALLLFLGMVTLASC. One can recognise a BetaSPN-type CS-alpha/beta domain in the interval 53 to 87; the sequence is QFGCPAYEGYCNNHCQDIERKDGECHGFKCKCAKD. 3 cysteine pairs are disulfide-bonded: C56-C77, C63-C82, and C67-C84.

Belongs to the long chain scorpion toxin family. Class 1 subfamily. Expressed by the venom gland.

The protein resides in the secreted. Its function is as follows. May have antibacterial activity. In terms of biological role, inhibits voltage-gated potassium channel. Does not induce hemolytic activity, lactate dehydrogenase (LDH) release from mast cells, mast cell degranulation, and antimicrobial effects. In vivo, injection into mice causes moderate edema formation, but induces very weak or no change in nociceptive sensibility. It also reduces mice locomotion, suggesting an increase in anxiety, but causes no alteration in rearing (standing on hind limbs). This chain is Scorpine-like peptide Tco 41.46-2, found in Tityus costatus (Brazilian scorpion).